The primary structure comprises 201 residues: 3-isopropylmalate dehydratase small subunit (201 aa).

The protein belongs to the LeuD family. LeuD type 1 subfamily. Heterodimer of LeuC and LeuD.

It catalyses the reaction (2R,3S)-3-isopropylmalate = (2S)-2-isopropylmalate. It participates in amino-acid biosynthesis; L-leucine biosynthesis; L-leucine from 3-methyl-2-oxobutanoate: step 2/4. Catalyzes the isomerization between 2-isopropylmalate and 3-isopropylmalate, via the formation of 2-isopropylmaleate. The polypeptide is 3-isopropylmalate dehydratase small subunit (Methylorubrum populi (strain ATCC BAA-705 / NCIMB 13946 / BJ001) (Methylobacterium populi)).